A 436-amino-acid chain; its full sequence is Probable D-serine dehydratase (436 aa).

The residue at position 111 (lysine 111) is an N6-(pyridoxal phosphate)lysine.

Belongs to the serine/threonine dehydratase family. DsdA subfamily. Requires pyridoxal 5'-phosphate as cofactor.

The enzyme catalyses D-serine = pyruvate + NH4(+). This is Probable D-serine dehydratase from Lactiplantibacillus plantarum (strain ATCC BAA-793 / NCIMB 8826 / WCFS1) (Lactobacillus plantarum).